A 130-amino-acid polypeptide reads, in one-letter code: Small ribosomal subunit protein uS11 (130 aa).

It belongs to the universal ribosomal protein uS11 family. As to quaternary structure, part of the 30S ribosomal subunit. Interacts with proteins S7 and S18. Binds to IF-3.

Functionally, located on the platform of the 30S subunit, it bridges several disparate RNA helices of the 16S rRNA. Forms part of the Shine-Dalgarno cleft in the 70S ribosome. The protein is Small ribosomal subunit protein uS11 of Latilactobacillus sakei subsp. sakei (strain 23K) (Lactobacillus sakei subsp. sakei).